The following is an 880-amino-acid chain: Alanine--tRNA ligase (880 aa).

Residues H568, H572, C670, and H674 each contribute to the Zn(2+) site.

Belongs to the class-II aminoacyl-tRNA synthetase family. Requires Zn(2+) as cofactor.

It is found in the cytoplasm. It catalyses the reaction tRNA(Ala) + L-alanine + ATP = L-alanyl-tRNA(Ala) + AMP + diphosphate. Its function is as follows. Catalyzes the attachment of alanine to tRNA(Ala) in a two-step reaction: alanine is first activated by ATP to form Ala-AMP and then transferred to the acceptor end of tRNA(Ala). Also edits incorrectly charged Ser-tRNA(Ala) and Gly-tRNA(Ala) via its editing domain. In Enterococcus faecalis (strain ATCC 700802 / V583), this protein is Alanine--tRNA ligase.